We begin with the raw amino-acid sequence, 459 residues long: Glutamyl-tRNA(Gln) amidotransferase subunit A, mitochondrial (459 aa).

Active-site charge relay system residues include Lys-37 and Ser-114. The Acyl-ester intermediate role is filled by Ser-138.

The protein belongs to the amidase family. GatA subfamily. Subunit of the heterotrimeric GatFAB amidotransferase (AdT) complex, composed of A, B and F subunits.

The protein localises to the mitochondrion. It carries out the reaction L-glutamyl-tRNA(Gln) + L-glutamine + ATP + H2O = L-glutaminyl-tRNA(Gln) + L-glutamate + ADP + phosphate + H(+). In terms of biological role, allows the formation of correctly charged Gln-tRNA(Gln) through the transamidation of misacylated Glu-tRNA(Gln) in the mitochondria. The reaction takes place in the presence of glutamine and ATP through an activated gamma-phospho-Glu-tRNA(Gln). The chain is Glutamyl-tRNA(Gln) amidotransferase subunit A, mitochondrial from Yarrowia lipolytica (strain CLIB 122 / E 150) (Yeast).